A 74-amino-acid polypeptide reads, in one-letter code: ATP synthase subunit c (74 aa).

The next 2 membrane-spanning stretches (helical) occupy residues 8–28 and 52–72; these read FIGVGLMAIGMYGAALGVSNI and IGAGLAEAIGLFSFVIAMLLI.

Belongs to the ATPase C chain family. As to quaternary structure, F-type ATPases have 2 components, F(1) - the catalytic core - and F(0) - the membrane proton channel. F(1) has five subunits: alpha(3), beta(3), gamma(1), delta(1), epsilon(1). F(0) has three main subunits: a(1), b(2) and c(10-14). The alpha and beta chains form an alternating ring which encloses part of the gamma chain. F(1) is attached to F(0) by a central stalk formed by the gamma and epsilon chains, while a peripheral stalk is formed by the delta and b chains.

It localises to the cell inner membrane. In terms of biological role, f(1)F(0) ATP synthase produces ATP from ADP in the presence of a proton or sodium gradient. F-type ATPases consist of two structural domains, F(1) containing the extramembraneous catalytic core and F(0) containing the membrane proton channel, linked together by a central stalk and a peripheral stalk. During catalysis, ATP synthesis in the catalytic domain of F(1) is coupled via a rotary mechanism of the central stalk subunits to proton translocation. Key component of the F(0) channel; it plays a direct role in translocation across the membrane. A homomeric c-ring of between 10-14 subunits forms the central stalk rotor element with the F(1) delta and epsilon subunits. In Rickettsia canadensis (strain McKiel), this protein is ATP synthase subunit c.